The sequence spans 248 residues: Triosephosphate isomerase (248 aa).

9 to 11 (NWK) is a binding site for substrate. His-94 serves as the catalytic Electrophile. Glu-166 functions as the Proton acceptor in the catalytic mechanism. Residues Gly-172, Ser-211, and 232–233 (GG) contribute to the substrate site.

Belongs to the triosephosphate isomerase family. Homodimer.

Its subcellular location is the cytoplasm. It carries out the reaction D-glyceraldehyde 3-phosphate = dihydroxyacetone phosphate. The protein operates within carbohydrate biosynthesis; gluconeogenesis. Its pathway is carbohydrate degradation; glycolysis; D-glyceraldehyde 3-phosphate from glycerone phosphate: step 1/1. Involved in the gluconeogenesis. Catalyzes stereospecifically the conversion of dihydroxyacetone phosphate (DHAP) to D-glyceraldehyde-3-phosphate (G3P). The polypeptide is Triosephosphate isomerase (Vesicomyosocius okutanii subsp. Calyptogena okutanii (strain HA)).